A 180-amino-acid chain; its full sequence is Large ribosomal subunit protein uL6 (180 aa).

It belongs to the universal ribosomal protein uL6 family. In terms of assembly, part of the 50S ribosomal subunit.

Its function is as follows. This protein binds to the 23S rRNA, and is important in its secondary structure. It is located near the subunit interface in the base of the L7/L12 stalk, and near the tRNA binding site of the peptidyltransferase center. In Thermus aquaticus, this protein is Large ribosomal subunit protein uL6.